The following is a 559-amino-acid chain: Forkhead box protein O6 (559 aa).

2 disordered regions span residues 1–77 (MAAK…VGPL) and 163–183 (SWWM…RRAV). A DNA-binding region (fork-head) is located at residues 88 to 182 (WGNLSYADLI…KTGKTPRRRA (95 aa)). The residue at position 184 (Ser184) is a Phosphoserine. 2 disordered regions span residues 197–232 (KASK…KWAA) and 534–559 (NFDS…WVPG). 2 stretches are compositionally biased toward pro residues: residues 213–222 (DSPPGAPVPG) and 539–553 (LPPP…PPPN).

In terms of processing, phosphorylation of Ser-184 is be important in regulating the transacriptional activity. Expressed in brain in areas of the nucleus accumbens, cingulate cortex, parts of the amygdala and in the hippocampus.

It is found in the cytoplasm. The protein resides in the nucleus. Functionally, transcriptional activator. The protein is Forkhead box protein O6 (Foxo6) of Mus musculus (Mouse).